We begin with the raw amino-acid sequence, 411 residues long: Glycogen synthase kinase-3 homolog MsK-3 (411 aa).

A Protein kinase domain is found at tyrosine 74–tyrosine 358. ATP-binding positions include valine 80–valine 88 and lysine 103. Aspartate 199 acts as the Proton acceptor in catalysis. Tyrosine 234 is subject to Phosphotyrosine.

Belongs to the protein kinase superfamily. CMGC Ser/Thr protein kinase family. GSK-3 subfamily. In terms of tissue distribution, absent in leaves and petioles, very low levels are seen in the stems and roots while a moderate expression is seen in the nodes.

The enzyme catalyses L-seryl-[protein] + ATP = O-phospho-L-seryl-[protein] + ADP + H(+). It catalyses the reaction L-threonyl-[protein] + ATP = O-phospho-L-threonyl-[protein] + ADP + H(+). The protein is Glycogen synthase kinase-3 homolog MsK-3 (MSK-3) of Medicago sativa (Alfalfa).